Here is a 74-residue protein sequence, read N- to C-terminus: Conotoxin VxVIA (74 aa).

The first 22 residues, 1–22 (MKLTCVLIIAVLFLTAYQLATA), serve as a signal peptide directing secretion. The propeptide occupies 23–47 (ASHAKGKQKHRALRPADKHFRFTKR). Intrachain disulfides connect cysteine 48/cysteine 62, cysteine 55/cysteine 66, and cysteine 61/cysteine 73.

As to expression, expressed by the venom duct.

The protein localises to the secreted. Its function is as follows. When injected intracranially in mice, induces a series of symptoms such as quivering, climbing, scratching, barrel rolling and paralysis of limbs. Unexpectedly, no effect is observed on ionic currents when tested on locust DUM neuron. The sequence is that of Conotoxin VxVIA from Conus vexillum (Flag cone).